We begin with the raw amino-acid sequence, 215 residues long: 23.2 kDa heat shock protein (215 aa).

Positions 1-27 (MASMRTAAAAAMLACIAVVLASTAADG) are cleaved as a signal peptide. A sHSP domain is found at 69–189 (DVAMLSMARV…GPRVVGIASA (121 aa)). Residues 183–215 (VVGIASAGGDDGGKKSIGGAGEGQNQQAKKVEL) form a disordered region. Residues 205-215 (GQNQQAKKVEL) are compositionally biased toward polar residues.

This sequence belongs to the small heat shock protein (HSP20) family. As to quaternary structure, may form oligomeric structures.

It is found in the endoplasmic reticulum. This Oryza sativa subsp. japonica (Rice) protein is 23.2 kDa heat shock protein (HSP23.2).